The chain runs to 240 residues: Ubiquinone biosynthesis O-methyltransferase (240 aa).

S-adenosyl-L-methionine is bound by residues Arg-44, Gly-64, Asp-85, and Met-129.

This sequence belongs to the methyltransferase superfamily. UbiG/COQ3 family.

The catalysed reaction is a 3-demethylubiquinol + S-adenosyl-L-methionine = a ubiquinol + S-adenosyl-L-homocysteine + H(+). The enzyme catalyses a 3-(all-trans-polyprenyl)benzene-1,2-diol + S-adenosyl-L-methionine = a 2-methoxy-6-(all-trans-polyprenyl)phenol + S-adenosyl-L-homocysteine + H(+). It functions in the pathway cofactor biosynthesis; ubiquinone biosynthesis. In terms of biological role, O-methyltransferase that catalyzes the 2 O-methylation steps in the ubiquinone biosynthetic pathway. This Escherichia coli O157:H7 protein is Ubiquinone biosynthesis O-methyltransferase.